The chain runs to 643 residues: MSISQTVSKSYTKSVSRGGQGVSYSQSSSHKVGGGSVRYGTTYSSGGISRVLGFQGGAGGAASAGFGGSVGGSGLSRVLGGSMVSGYRSGMGVGGLSLSGTAGLPVSLRGVGAGKALHAITSAFRTRVGGPGTSVGGYGVNYSFLPSTAGPSFGGPFGGPFGGPFGGPLGPGYIDPATLPSPDTVQHTRIREKQDLQTLNTKFANLVDQVRTLEQHNAILKAQISMITSPSDTPEGPVNTAVVASTVTATYNAQIEDLRTTNTALHSEIDHLTTIINDITTKYEEQVEVTRTLETDWNTNKDNIDNTYLTIVDLQTKVQGLDEQINTTKQIYNARVREVQAAVTGGPTAAYSIRVDNTHQAIDLTTSLQEMKTHYEVLATKSREEAFTQVQPRIQEMAVTVQAGPQAIIQAKEQIHVFKLQIDSVHREIDRLHRKNTDVEREITVIETNIHTQSDEWTNNINSLKVDLEVIKKQITQYARDYQDLLATKMSLDVEIAAYKKLLDSEETRISHGGGITITTNAGTFPGGLSAAPGGGASYAMVPAGVGGVGLAGVGGYGFRSMGGGGGVGYGAGGGGVGYGVGGGFGGGMGMSMSRMSMGAAVGGGSYGSGSGYSGGFGLSSSRAGYSASRKSYSSARSSSRIY.

Over residues 1–13 the composition is skewed to polar residues; the sequence is MSISQTVSKSYTK. A disordered region spans residues 1-34; that stretch reads MSISQTVSKSYTKSVSRGGQGVSYSQSSSHKVGG. The segment at 1-191 is head; it reads MSISQTVSKS…PDTVQHTRIR (191 aa). Positions 14–31 are enriched in low complexity; the sequence is SVSRGGQGVSYSQSSSHK. The 319-residue stretch at 192–510 folds into the IF rod domain; it reads EKQDLQTLNT…KLLDSEETRI (319 aa). The segment at 193–227 is coil 1A; the sequence is KQDLQTLNTKFANLVDQVRTLEQHNAILKAQISMI. The segment at 228–240 is linker 1; that stretch reads TSPSDTPEGPVNT. The segment at 241–341 is coil 1B; sequence AVVASTVTAT…YNARVREVQA (101 aa). The linker 12 stretch occupies residues 342-362; sequence AVTGGPTAAYSIRVDNTHQAI. The tract at residues 363-381 is coil 2A; sequence DLTTSLQEMKTHYEVLATK. A linker 2 region spans residues 382–389; it reads SREEAFTQ. Residues 390-510 form a coil 2B region; the sequence is VQPRIQEMAV…KLLDSEETRI (121 aa). The tail stretch occupies residues 511 to 643; it reads SHGGGITITT…SSARSSSRIY (133 aa). Positions 622–643 are disordered; it reads SRAGYSASRKSYSSARSSSRIY.

The protein belongs to the intermediate filament family. As to quaternary structure, coiled-coil heterodimer of an alpha and a gamma subunit. Assemble into 10 nm filaments. Forms a massive, conical, intermediate filament biopolymer of approximately 60 cm.

It is found in the secreted. Its subcellular location is the extracellular space. Its function is as follows. Released extracellularly into seawater and provides physical and biological defense against invasive organism by modulation of the viscoelastic properties of mucus. This Eptatretus stoutii (Pacific hagfish) protein is Thread biopolymer filament subunit alpha.